A 949-amino-acid polypeptide reads, in one-letter code: Lon protease homolog, mitochondrial (949 aa).

Residues 1–65 (MAASTGYVRL…VLPGGVQWRG (65 aa)) constitute a mitochondrion transit peptide. 2 disordered regions span residues 68–94 (DSGN…TGEG) and 213–240 (EGLE…DELG). In terms of domain architecture, Lon N-terminal spans 112-359 (LPLIAITRNP…KALSLLKKEF (248 aa)). A compositionally biased stretch (basic residues) spans 223 to 232 (KSRRKLKRGK). An ATP-binding site is contributed by 512–519 (GPPGVGKT). The Lon proteolytic domain occupies 748-938 (VTPPGVVMGL…RDIFPIAFPR (191 aa)). Active-site residues include S844 and K887.

Belongs to the peptidase S16 family. In terms of assembly, homohexamer. Organized in a ring with a central cavity. The ATP-binding and proteolytic domains (AP-domain) form a hexameric chamber, while the N-terminal domain is arranged as a trimer of dimers. DNA and RNA binding is stimulated by substrate and inhibited by ATP binding. Interacts with TWNK and mitochondrial DNA polymerase subunit POLG. Detected in liver &gt; heart &gt; kidney &gt; testis.

It is found in the mitochondrion matrix. It carries out the reaction Hydrolysis of proteins in presence of ATP.. ATP-dependent serine protease that mediates the selective degradation of misfolded, unassembled or oxidatively damaged polypeptides as well as certain short-lived regulatory proteins in the mitochondrial matrix. Endogenous substrates include mitochondrial steroidogenic acute regulatory (StAR) protein, DELE1, helicase Twinkle (TWNK) and the large ribosomal subunit protein MRPL32/bL32m. MRPL32/bL32m is protected from degradation by LONP1 when it is bound to a nucleic acid (RNA), but TWNK is not. May also have a chaperone function in the assembly of inner membrane protein complexes. Participates in the regulation of mitochondrial gene expression and in the maintenance of the integrity of the mitochondrial genome. Binds to mitochondrial promoters and RNA in a single-stranded, site-specific, and strand-specific manner. May regulate mitochondrial DNA replication and/or gene expression using site-specific, single-stranded DNA binding to target the degradation of regulatory proteins binding to adjacent sites in mitochondrial promoters. The sequence is that of Lon protease homolog, mitochondrial (Lonp1) from Mus musculus (Mouse).